A 200-amino-acid polypeptide reads, in one-letter code: Dual-action ribosomal maturation protein DarP (200 aa).

Disordered stretches follow at residues M1–S25 and T177–A200. Over residues H12–S25 the composition is skewed to basic and acidic residues. Residues G184–A200 are compositionally biased toward acidic residues.

The protein belongs to the DarP family.

It is found in the cytoplasm. Functionally, member of a network of 50S ribosomal subunit biogenesis factors which assembles along the 30S-50S interface, preventing incorrect 23S rRNA structures from forming. Promotes peptidyl transferase center (PTC) maturation. In Burkholderia ambifaria (strain MC40-6), this protein is Dual-action ribosomal maturation protein DarP.